Consider the following 463-residue polypeptide: tRNA (guanine(10)-N(2))-methyltransferase TRMT11 (463 aa).

N-acetylalanine is present on alanine 2.

This sequence belongs to the class I-like SAM-binding methyltransferase superfamily. TRM11 methyltransferase family. As to quaternary structure, part of the heterodimeric TRMT11-TRM112 methyltransferase complex; this complex forms an active tRNA methyltransferase, where TRMT112 acts as an activator of the catalytic subunit TRMT11.

It localises to the cytoplasm. It carries out the reaction guanosine(10) in tRNA + S-adenosyl-L-methionine = N(2)-methylguanosine(10) in tRNA + S-adenosyl-L-homocysteine + H(+). Its function is as follows. Catalytic subunit of the TRMT11-TRM112 methyltransferase complex, that specifically mediates the S-adenosyl-L-methionine-dependent N(2)-methylation of guanosine nucleotide at position 10 (m2G10) in tRNAs. This is one of the major tRNA (guanine-N(2))-methyltransferases. This is tRNA (guanine(10)-N(2))-methyltransferase TRMT11 from Homo sapiens (Human).